The chain runs to 349 residues: Estrogen receptor (349 aa).

The segment at residues 1-5 (YEVGM) is a DNA-binding region (nuclear receptor). Residues 1-38 (YEVGMMKGGIRKDRRGGRMLKHKRQREENDSRNAGALT) are disordered. The span at 12 to 24 (KDRRGGRMLKHKR) shows a compositional bias: basic residues. In terms of domain architecture, NR LBD spans 65-301 (TADQMVSALL…DLLLEMLDAH (237 aa)). The segment at 306–327 (PAAKGSPPSEDDPLNQLAVPSP) is disordered.

The protein belongs to the nuclear hormone receptor family. NR3 subfamily. As to quaternary structure, binds DNA as a homodimer. Can form a heterodimer with ER-beta.

Its subcellular location is the nucleus. The steroid hormones and their receptors are involved in the regulation of eukaryotic gene expression and affect cellular proliferation and differentiation in target tissues. The polypeptide is Estrogen receptor (ESR1) (Anolis carolinensis (Green anole)).